The following is a 358-amino-acid chain: Chorismate synthase (358 aa).

NADP(+) is bound at residue R48. FMN contacts are provided by residues 125–127 (RAS), S277, 292–296 (KPIPS), and R318.

Belongs to the chorismate synthase family. Homotetramer. Requires FMNH2 as cofactor.

The enzyme catalyses 5-O-(1-carboxyvinyl)-3-phosphoshikimate = chorismate + phosphate. The protein operates within metabolic intermediate biosynthesis; chorismate biosynthesis; chorismate from D-erythrose 4-phosphate and phosphoenolpyruvate: step 7/7. Functionally, catalyzes the anti-1,4-elimination of the C-3 phosphate and the C-6 proR hydrogen from 5-enolpyruvylshikimate-3-phosphate (EPSP) to yield chorismate, which is the branch point compound that serves as the starting substrate for the three terminal pathways of aromatic amino acid biosynthesis. This reaction introduces a second double bond into the aromatic ring system. This chain is Chorismate synthase, found in Desulfatibacillum aliphaticivorans.